The chain runs to 202 residues: Oocyte-secreted protein 1 (202 aa).

The N-terminal stretch at 1–21 is a signal peptide; sequence MKPFVGLLGLLLLLSFMKTCA. The tract at residues 157-183 is disordered; it reads QPNLSTSSEDHHVSTEPWASETSRSEA.

This sequence belongs to the PLAC1 family. Expressed in oocytes in primary through antral-stage follicles. Expressed in liver and ovary.

The protein resides in the secreted. In terms of biological role, may be involved in cell differentiation. This chain is Oocyte-secreted protein 1 (Oosp1), found in Mus musculus (Mouse).